The following is a 58-amino-acid chain: Small ribosomal subunit protein bS21C (58 aa).

Residues 38 to 58 (YEKPSLRRKRKAEAARKGGRY) form a disordered region. A compositionally biased stretch (basic and acidic residues) spans 49 to 58 (AEAARKGGRY).

It belongs to the bacterial ribosomal protein bS21 family.

This is Small ribosomal subunit protein bS21C (rpsU3) from Nostoc sp. (strain PCC 7120 / SAG 25.82 / UTEX 2576).